Consider the following 584-residue polypeptide: uncharacterized protein (584 aa).

A helical membrane pass occupies residues 15-35; that stretch reads FIFFVLVFFICIIFGCIYESL. 2 stretches are compositionally biased toward polar residues: residues 184-194 and 204-225; these read DVSTENSYTHN and GKRT…SYNI. Residues 184 to 226 form a disordered region; the sequence is DVSTENSYTHNNSRDDEPQNGKRTYNNQSNNNLPYDNSSYNIS. 2 coiled-coil regions span residues 267 to 319 and 436 to 477; these read DNYP…DNYP and RDNH…HYKR.

The protein resides in the membrane. This is an uncharacterized protein from Plasmodium falciparum (isolate 3D7).